The sequence spans 294 residues: MTLKIGTRGSLLATTQSGHVRDDLRPYEAELVIVTTHGDVNMAPVERIGVGVFTQALREELHTGGCDIAVHSFKDLPTELDPRFHLVVPKRADFRDCLIARDGLSLADLPAGALIGTGAPRRISQIKALRPDVECVPLRGNIDTRMGKVTSGELDAVVLAYAGLTRVGRGDEATQVFDPQDFLPAPAQGALAVECRADDAYAREAIDSICDEQAQVCAVTERVVLNRLEAGCTAPVAAHATLNDGTLTLTAAVIALDGSKVVRRELSAPVAENVALAEELTRALIADGAATILG.

Cysteine 232 bears the S-(dipyrrolylmethanemethyl)cysteine mark.

It belongs to the HMBS family. In terms of assembly, monomer. Dipyrromethane serves as cofactor.

It carries out the reaction 4 porphobilinogen + H2O = hydroxymethylbilane + 4 NH4(+). It functions in the pathway porphyrin-containing compound metabolism; protoporphyrin-IX biosynthesis; coproporphyrinogen-III from 5-aminolevulinate: step 2/4. Tetrapolymerization of the monopyrrole PBG into the hydroxymethylbilane pre-uroporphyrinogen in several discrete steps. The sequence is that of Porphobilinogen deaminase from Corynebacterium diphtheriae (strain ATCC 700971 / NCTC 13129 / Biotype gravis).